The sequence spans 469 residues: Argininosuccinate lyase (469 aa).

This sequence belongs to the lyase 1 family. Argininosuccinate lyase subfamily.

Its subcellular location is the cytoplasm. It carries out the reaction 2-(N(omega)-L-arginino)succinate = fumarate + L-arginine. Its pathway is amino-acid biosynthesis; L-arginine biosynthesis; L-arginine from L-ornithine and carbamoyl phosphate: step 3/3. The polypeptide is Argininosuccinate lyase (Burkholderia thailandensis (strain ATCC 700388 / DSM 13276 / CCUG 48851 / CIP 106301 / E264)).